Reading from the N-terminus, the 134-residue chain is ATP synthase epsilon chain (134 aa).

It belongs to the ATPase epsilon chain family. As to quaternary structure, F-type ATPases have 2 components, CF(1) - the catalytic core - and CF(0) - the membrane proton channel. CF(1) has five subunits: alpha(3), beta(3), gamma(1), delta(1), epsilon(1). CF(0) has three main subunits: a, b and c.

The protein localises to the cell membrane. Produces ATP from ADP in the presence of a proton gradient across the membrane. This Staphylococcus saprophyticus subsp. saprophyticus (strain ATCC 15305 / DSM 20229 / NCIMB 8711 / NCTC 7292 / S-41) protein is ATP synthase epsilon chain.